A 313-amino-acid polypeptide reads, in one-letter code: tRNA pseudouridine synthase B (313 aa).

Aspartate 42 (nucleophile) is an active-site residue.

Belongs to the pseudouridine synthase TruB family. Type 1 subfamily.

It carries out the reaction uridine(55) in tRNA = pseudouridine(55) in tRNA. In terms of biological role, responsible for synthesis of pseudouridine from uracil-55 in the psi GC loop of transfer RNAs. The sequence is that of tRNA pseudouridine synthase B from Prochlorococcus marinus (strain SARG / CCMP1375 / SS120).